We begin with the raw amino-acid sequence, 461 residues long: MDEMPEPPAMTVHLLANAGQGLLLQQTLDQLLDCICPDIRLFLVSERASPVKYYDKCHSKRSRFPGMSVLLFLKENLGEERLFHVLDSLQHWPWQCYPTQNAQGRPCPYILANQEFYSLDSQMPIWGVRQVHCGTEILRVTLYCSFDNYEDAIRLYAMILQREATLQKSNFCFFVLYSTETFALQLSLKQLPLGTSVDPKEASVLQFKVQEIGQLVPLLPHPCVPISRTRWQTQDYDGNKILLQVQLNPGLGVRNGEPPFLNGTLGADTLPHGSRLTPVSAIRTLELRSRRIRGRRFKVSSVELPEPGGRPVSDGSSNTWWKSAGGSAQPSSPATESQPQLSSLHLEPGARMKVLGRENSFEKLEAETNVDTGFTMVSSEPRPSFASRFPRNLQTHQPPSCLSTSFSGSAASKNNRIFKERVHPLPLAGQRDLGAKKILSKCPLPLPVQGEAKEAEEEFFI.

Ser49 carries the phosphoserine modification. The disordered stretch occupies residues 302 to 346 (VELPEPGGRPVSDGSSNTWWKSAGGSAQPSSPATESQPQLSSLHL). Low complexity predominate over residues 323 to 334 (SAGGSAQPSSPA).

It belongs to the FAM124 family. As to quaternary structure, interacts with CHD7 and CHD8.

The protein localises to the nucleus. This is Protein FAM124B (FAM124B) from Bos taurus (Bovine).